A 537-amino-acid chain; its full sequence is Chaperonin GroEL 2 (537 aa).

Residues 29-32, 86-90, glycine 413, 477-479, and aspartate 493 contribute to the ATP site; these read TLGP, DGTTT, and NAA.

It belongs to the chaperonin (HSP60) family. As to quaternary structure, forms a cylinder of 14 subunits composed of two heptameric rings stacked back-to-back. Interacts with the co-chaperonin GroES.

The protein localises to the cytoplasm. It carries out the reaction ATP + H2O + a folded polypeptide = ADP + phosphate + an unfolded polypeptide.. Its function is as follows. Together with its co-chaperonin GroES, plays an essential role in assisting protein folding. The GroEL-GroES system forms a nano-cage that allows encapsulation of the non-native substrate proteins and provides a physical environment optimized to promote and accelerate protein folding. The sequence is that of Chaperonin GroEL 2 from Rhodococcus jostii (strain RHA1).